The sequence spans 338 residues: Sulfotransferase 2B1 (338 aa).

Position 67–72 (67–72 (KSGTNW)) interacts with 3'-phosphoadenylyl sulfate. 2 residues coordinate substrate: W95 and W100. H122 functions as the Proton acceptor in the catalytic mechanism. 3'-phosphoadenylyl sulfate is bound by residues R144, S152, Y207, 241 to 246 (SAFAAM), and 271 to 273 (RKG). A disordered region spans residues 301–338 (VQRFPWDTSEEDSSPDGQPDPEPSPSPASDDPNPGSSQ). Residues 327–338 (PASDDPNPGSSQ) show a composition bias toward low complexity.

The protein belongs to the sulfotransferase 1 family. Expressed at high levels in epididymis, intestine and uterus, and low levels in brain and hypothalamus. Isoform 2 is most prominent in the brain and spinal cord, with modest expression in the lung, skin and spleen. Isoform 1 is most prominently expressed in skin and small intestine, with modest expression in muscle and prostate.

It is found in the cytoplasm. Its subcellular location is the cytosol. The protein resides in the microsome. It localises to the nucleus. The catalysed reaction is an alcohol + 3'-phosphoadenylyl sulfate = an alkyl sulfate + adenosine 3',5'-bisphosphate + H(+). It catalyses the reaction pregnenolone + 3'-phosphoadenylyl sulfate = pregnenolone sulfate + adenosine 3',5'-bisphosphate + H(+). It carries out the reaction 3beta-hydroxyandrost-5-en-17-one + 3'-phosphoadenylyl sulfate = dehydroepiandrosterone 3-sulfate + adenosine 3',5'-bisphosphate + H(+). The enzyme catalyses cholesterol + 3'-phosphoadenylyl sulfate = cholesterol sulfate + adenosine 3',5'-bisphosphate + H(+). Functionally, sulfotransferase that utilizes 3'-phospho-5'-adenylyl sulfate (PAPS) as sulfonate donor to catalyze the sulfate conjugation. Preferentially sulfonates cholesterol. Catalyzes sulfation of the 3beta-hydroxyl groups of steroids, such as, pregnenolone and dehydroepiandrosterone (DHEA). Cholesterol sulfation is approximately 10-fold higher than for pregnenolone and 20-fold higher than for DHEA. Plays a role in epidermal cholesterol metabolism and in the regulation of epidermal proliferation and differentiation. In terms of biological role, strongly sulfonates pregnenolone, however is capable to sulfonate cholesterol with a high degree of efficiency. DHEA is a relatively poor substrate. This Mus musculus (Mouse) protein is Sulfotransferase 2B1 (Sult2b1).